The sequence spans 880 residues: Alanine--tRNA ligase (880 aa).

Zn(2+) contacts are provided by His567, His571, Cys669, and His673.

It belongs to the class-II aminoacyl-tRNA synthetase family. It depends on Zn(2+) as a cofactor.

The protein localises to the cytoplasm. The enzyme catalyses tRNA(Ala) + L-alanine + ATP = L-alanyl-tRNA(Ala) + AMP + diphosphate. Its function is as follows. Catalyzes the attachment of alanine to tRNA(Ala) in a two-step reaction: alanine is first activated by ATP to form Ala-AMP and then transferred to the acceptor end of tRNA(Ala). Also edits incorrectly charged Ser-tRNA(Ala) and Gly-tRNA(Ala) via its editing domain. This Syntrophomonas wolfei subsp. wolfei (strain DSM 2245B / Goettingen) protein is Alanine--tRNA ligase.